We begin with the raw amino-acid sequence, 225 residues long: Uracil-DNA glycosylase (225 aa).

The active-site Proton acceptor is aspartate 65.

The protein belongs to the uracil-DNA glycosylase (UDG) superfamily. UNG family.

Its subcellular location is the cytoplasm. The enzyme catalyses Hydrolyzes single-stranded DNA or mismatched double-stranded DNA and polynucleotides, releasing free uracil.. Excises uracil residues from the DNA which can arise as a result of misincorporation of dUMP residues by DNA polymerase or due to deamination of cytosine. This chain is Uracil-DNA glycosylase, found in Bacillus thuringiensis subsp. konkukian (strain 97-27).